Here is a 332-residue protein sequence, read N- to C-terminus: Probable farnesyl diphosphate synthase (332 aa).

Isopentenyl diphosphate contacts are provided by Lys-75, Arg-78, and His-107. The Mg(2+) site is built by Asp-114 and Asp-120. Residue Arg-125 participates in (2E)-geranyl diphosphate binding. Arg-126 lines the isopentenyl diphosphate pocket. (2E)-geranyl diphosphate is bound by residues Lys-208, Ser-209, Gln-250, and Lys-267.

It belongs to the FPP/GGPP synthase family. The cofactor is Mg(2+).

It localises to the cytoplasm. It catalyses the reaction isopentenyl diphosphate + (2E)-geranyl diphosphate = (2E,6E)-farnesyl diphosphate + diphosphate. The protein is Probable farnesyl diphosphate synthase (fppS) of Bradyrhizobium diazoefficiens (strain JCM 10833 / BCRC 13528 / IAM 13628 / NBRC 14792 / USDA 110).